We begin with the raw amino-acid sequence, 752 residues long: Cation-transporting P-type ATPase B (752 aa).

One can recognise an HMA domain in the interval 15–78; that stretch reads RRIRLDVSGM…VVEKAGYHAA (64 aa). The a metal cation site is built by Cys-26 and Cys-29. 6 helical membrane-spanning segments follow: residues 105–125, 132–152, 167–187, 201–221, 361–381, and 390–410; these read LLVA…FAIV, GWGY…AWPF, METL…SSVF, AILN…VFVL, IAGV…AAWL, and AFSV…GLAT. Asp-446 functions as the 4-aspartylphosphate intermediate in the catalytic mechanism. The helical transmembrane segment at 714 to 734 threads the bilayer; the sequence is AIPIAAAGLLNPLIAGAAMAF.

It belongs to the cation transport ATPase (P-type) (TC 3.A.3) family. Type IB subfamily.

The protein resides in the cell membrane. It carries out the reaction ATP + H2O = ADP + phosphate + H(+). The chain is Cation-transporting P-type ATPase B (ctpB) from Mycobacterium bovis (strain ATCC BAA-935 / AF2122/97).